A 219-amino-acid polypeptide reads, in one-letter code: Transmembrane emp24 domain-containing protein 10 (219 aa).

The first 31 residues, 1–31 (MSGWSGPLARRGPGPLALLFLFLLGPSSVLA), serve as a signal peptide directing secretion. The tract at residues 1–142 (MSGWSGPLAR…KNYEEIAKVE (142 aa)) is required for interaction with STX17. At 32–185 (ISFHLPVNSR…RDTNESTNTR (154 aa)) the chain is on the lumenal side. Residues 41-193 (RKCLREEIHK…TRVLYFSIFS (153 aa)) form the GOLD domain. The interval 147–178 (LEVELRRLEDLSESIVNDFAYMKKREEEMRDT) is required for TMED10 and TMED2 cis-Golgi network localization. 2 positions are modified to dimethylated arginine: Arg171 and Arg176. Asn179 is a glycosylation site (N-linked (GlcNAc...) asparagine). The helical transmembrane segment at 186–206 (VLYFSIFSMFCLIGLATWQVF) threads the bilayer. Positions 204 to 219 (QVFYLRRFFKAKKLIE) are interaction with COPG1. Over 207 to 219 (YLRRFFKAKKLIE) the chain is Cytoplasmic. An interaction with ARF1 and IL1B region spans residues 207–219 (YLRRFFKAKKLIE). Residues 211 to 212 (FF) carry the COPII vesicle coat-binding motif. Residues 211-219 (FFKAKKLIE) carry the COPI vesicle coat-binding motif.

The protein belongs to the EMP24/GP25L family. As to quaternary structure, predominantly dimeric and to a lesser extent monomeric in the ER. Monomer and dimer in ERGIC and cis-Golgi network. Forms homooligomer (via GOLD domain); the assembly is promoted by direct binding with leaderless cargos and may form a protein channel that facilitates cargo entry into the ERGIC. Forms heterooligomeric complexes with other members of the p24 family such as TMED2, TMED7 and TMED9. Interacts (via GOLD domain) with TMED2 (via GOLD domain); the complex is required for export of TMED10 from the ER to the cis-Golgi network; the complex is proposed to be involved in cis-Golgi network dynamics and / or biogenesis. Associates with the COPI vesicle coat subunits (coatomer). Tetramerization of the cytoplasmic domain at the Golgi membrane in vitro; the complex is proposed to interact with COPI coatomer and induce budding of the vesicles. Interacts with COPG1; the interaction involves TMED10 homodimer. Interacts with ARF1 (GDP-bound); the interaction probably involves a TMED10 oligomer. Interacts with SEC23A, SEC24B, SEC24C and SEC24D components of the coat protein complex II/COPII, indicative of an association of TMED10 with the COPII vesicle coat. Interacts with CD59. Interacts with MPPE1/PGAP5; the complex might recruit and sort GPI-anchored proteins to the ER-exit site, or the interaction might lead to recycling of PGAP5 between the ER and the Golgi. Interacts with F2LR1/PAR2. Interacts with KDELR2/ERD2; the interaction is disrupted by KDELR2 ligand. Found in a complex composed at least of SURF4, TMED2 and TMED10. Associates with the presenilin-dependent gamma-secretase complex. Interacts with STX17; the interaction is direct. Interacts with IL-1; the interaction is direct. Interacts with RAB21 (active GTP-bound form); the interaction is indirect and regulates TMED10 abundance and localization at the Golgi.

It is found in the endoplasmic reticulum membrane. Its subcellular location is the endoplasmic reticulum-Golgi intermediate compartment membrane. The protein resides in the golgi apparatus membrane. It localises to the golgi apparatus. The protein localises to the cis-Golgi network membrane. It is found in the trans-Golgi network membrane. Its subcellular location is the cytoplasmic vesicle. The protein resides in the secretory vesicle membrane. It localises to the cell membrane. The protein localises to the melanosome. Cargo receptor involved in protein vesicular trafficking and quality control in the endoplasmic reticulum (ER) and Golgi. The p24 protein family is a group of transmembrane proteins that bind coat protein complex I/COPI and coat protein complex II/COPII involved in vesicular trafficking between the membranes. Acts at the lumenal side for incorporation of secretory cargo molecules into transport vesicles and involved in vesicle coat formation at the cytoplasmic side. Mainly functions in the early secretory pathway and cycles between the ER, ER-Golgi intermediate compartment (ERGIC) and Golgi, mediating cargo transport through COPI and COPII-coated vesicles. In COPII vesicle-mediated anterograde transport, involved in the transport of GPI-anchored proteins by acting together with TMED2 as their cargo receptor; the function specifically implies SEC24C and SEC24D of the COPII vesicle coat and lipid raft-like microdomains of the ER. Recognizes GPI anchors structural remodeled in the ER by the GPI inositol-deacylase/PGAP1 and the metallophosphoesterase MPPE1/PGAP5. In COPI vesicle-mediated retrograde transport, involved in the biogenesis of COPI vesicles and vesicle coat recruitment. Involved in trafficking of amyloid beta A4 protein and soluble APP-beta release (independent from the modulation of gamma-secretase activity). Involved in the KDELR2-mediated retrograde transport of the toxin A subunit (CTX-A-K63)together with COPI and the COOH terminus of KDELR2. On Golgi membranes, acts as a primary receptor for ARF1-GDP, a GTP-binding protein involved in COPI-vesicle formation. Increases coatomer-dependent GTPase-activating activity of ARFGAP2 which mediates the hydrolysis of ARF1-bound GTP and therefore modulates protein trafficking from the Golgi apparatus. Involved in the exocytic trafficking of G protein-coupled receptors F2LR1/PAR2 (trypsin and tryspin-like enzyme receptor), OPRM1 (opioid receptor) and P2RY4 (UTD and UDP receptor) from the Golgi to the plasma membrane, thus contributing to receptor resensitization. In addition to its cargo receptor activity, may also act as a protein channel after oligomerization, facilitating the post-translational entry of leaderless cytoplasmic cargo into the ERGIC. Involved in the translocation into ERGIC, the vesicle entry and the secretion of leaderless cargos (lacking the secretion signal sequence), including the mature form of interleukin 1/IL-1 family members, the alpha-crystallin B chain HSPB5, the carbohydrate-binding proteins galectin-1/LGALS1 and galectin-3/LGALS3, the microtubule-associated protein Tau/MAPT, and the annexin A1/ANXA1; the translocation process is dependent on cargo protein unfolding and enhanced by chaperones HSP90AB1 and HSP90B1/GRP9. Could also associates with the presenilin-dependent gamma-secretase complex in order to regulate gamma-cleavages of the amyloid beta A4 protein to yield amyloid-beta 40/Abeta40. The sequence is that of Transmembrane emp24 domain-containing protein 10 (TMED10) from Oryctolagus cuniculus (Rabbit).